A 409-amino-acid chain; its full sequence is Elongation factor Tu (409 aa).

Positions 10 to 214 (KPHVNIGTIG…AVDSYIPDPE (205 aa)) constitute a tr-type G domain. Positions 19 to 26 (GHVDHGKT) are G1. 19-26 (GHVDHGKT) lines the GTP pocket. Thr26 lines the Mg(2+) pocket. Residues 60–64 (GITIN) form a G2 region. A G3 region spans residues 81-84 (DCPG). GTP-binding positions include 81–85 (DCPGH) and 136–139 (NKED). The tract at residues 136–139 (NKED) is G4. The segment at 174–176 (SGL) is G5.

Monomer.

Its subcellular location is the cytoplasm. It carries out the reaction GTP + H2O = GDP + phosphate + H(+). Its function is as follows. GTP hydrolase that promotes the GTP-dependent binding of aminoacyl-tRNA to the A-site of ribosomes during protein biosynthesis. The chain is Elongation factor Tu from Nostoc sp. (strain PCC 7120 / SAG 25.82 / UTEX 2576).